A 378-amino-acid chain; its full sequence is Probable cytochrome oxidase subunit 2 (378 aa).

At 1–8 (MIDYEFLR) the chain is on the cytoplasmic side. The chain crosses the membrane as a helical span at residues 9–28 (FIWWVLVIVLLIGFSVTDGF). Topologically, residues 29–79 (DMGVTALLPVIGKKEVERRIMINTIAPHWDGNQVWLLTAGGAIFAAWPIVY) are periplasmic. Residues 80–99 (AVSFSGFYIALVLVLAALFL) traverse the membrane as a helical segment. Topologically, residues 100–122 (RPLGFEYRAKIDNPTWRSVWDWG) are cytoplasmic. The chain crosses the membrane as a helical span at residues 123–142 (LFAGGFVPALVFGVAFGNLL). The Periplasmic segment spans residues 143–164 (QGVPFHFNELTQVTYTGSFFEL). The helical transmembrane segment at 165 to 184 (LNPFALLCGVISLSMLVTHG) threads the bilayer. Over 185–205 (ANWLQMKTTEALRDRARTVSQ) the chain is Cytoplasmic. A helical membrane pass occupies residues 206–224 (IGSIVTLIAFVLAGVWLYS). Over 225-261 (KDGYVVTSTIDHFAPSSPMNKEVAVETGAWFRNFNEM) the chain is Periplasmic. A helical membrane pass occupies residues 262–281 (PILWIFPALAVVAALLNAAF). Residues 282 to 291 (SKANRCGFAF) are Cytoplasmic-facing. A helical transmembrane segment spans residues 292–311 (FFSALTMAGVIITAAVSMFP). Over 312-335 (FVMPSSSHPEQSLLMWDSTSSELT) the chain is Periplasmic. Residues 336 to 355 (LTLMLIFAVVFVVIALAYTI) traverse the membrane as a helical segment. The Cytoplasmic segment spans residues 356–378 (WSYSKMFGRLDANFIDKNKHSLY).

Belongs to the cytochrome ubiquinol oxidase subunit 2 family. In terms of assembly, heterodimer of subunits I and II.

It is found in the cell inner membrane. Functionally, probable cytochrome oxidase subunit. This chain is Probable cytochrome oxidase subunit 2, found in Haemophilus influenzae (strain ATCC 51907 / DSM 11121 / KW20 / Rd).